A 49-amino-acid polypeptide reads, in one-letter code: Osteocalcin (49 aa).

The region spanning 1-47 is the Gla domain; that stretch reads YLDHGLGAPAPYPDPLEPRREVCELNPDCDELADHIGFQEAYRRFYG. Position 9 is a hydroxyproline (Pro9). 4 residues coordinate Ca(2+): Glu17, Glu21, Glu24, and Asp30. Residues Glu17, Glu21, and Glu24 each carry the 4-carboxyglutamate modification. Cys23 and Cys29 form a disulfide bridge.

This sequence belongs to the osteocalcin/matrix Gla protein family. Post-translationally, gamma-carboxyglutamate residues are formed by vitamin K dependent carboxylation by GGCX. These residues are essential for the binding of calcium. Decarboxylation promotes the hormone activity.

The protein resides in the secreted. In terms of biological role, the carboxylated form is one of the main organic components of the bone matrix, which constitutes 1-2% of the total bone protein. It acts as a negative regulator of bone formation and is required to limit bone formation without impairing bone resorption or mineralization. The carboxylated form binds strongly to apatite and calcium. The uncarboxylated form acts as a hormone secreted by osteoblasts, which regulates different cellular processes, such as energy metabolism, male fertility and brain development. Regulates of energy metabolism by acting as a hormone favoring pancreatic beta-cell proliferation, insulin secretion and sensitivity and energy expenditure. Uncarboxylated osteocalcin hormone also promotes testosterone production in the testes: acts as a ligand for G protein-coupled receptor GPRC6A at the surface of Leydig cells, initiating a signaling response that promotes the expression of enzymes required for testosterone synthesis in a CREB-dependent manner. Also acts as a regulator of brain development: osteocalcin hormone crosses the blood-brain barrier and acts as a ligand for GPR158 on neurons, initiating a signaling response that prevents neuronal apoptosis in the hippocampus, favors the synthesis of all monoamine neurotransmitters and inhibits that of gamma-aminobutyric acid (GABA). Osteocalcin also crosses the placenta during pregnancy and maternal osteocalcin is required for fetal brain development. The polypeptide is Osteocalcin (BGLAP) (Sus scrofa (Pig)).